The following is a 188-amino-acid chain: Deoxycytidylate deaminase (188 aa).

In terms of domain architecture, CMP/dCMP-type deaminase spans 1 to 171 (MKASTVLQIA…DILRNAGIEV (171 aa)). Residues Cys-19, Cys-49, His-94, Glu-102, and His-104 each coordinate Zn(2+). Glu-106 serves as the catalytic Proton donor. Residues Cys-132 and Cys-135 each coordinate Zn(2+).

It belongs to the cytidine and deoxycytidylate deaminase family. Homohexamer. The cofactor is Zn(2+).

It carries out the reaction dCMP + H2O + H(+) = dUMP + NH4(+). Its activity is regulated as follows. Allosteric enzyme whose activity is greatly influenced by the end products of its metabolic pathway, dCTP and dTTP. Functionally, supplies the nucleotide substrate for thymidylate synthetase. This is Deoxycytidylate deaminase (CD) from Enterobacteria phage T2 (Bacteriophage T2).